A 304-amino-acid polypeptide reads, in one-letter code: Putative S-adenosyl-L-methionine-dependent methyltransferase MAV_4444 (304 aa).

S-adenosyl-L-methionine contacts are provided by residues aspartate 130 and 159–160 (DL).

Belongs to the UPF0677 family.

Its function is as follows. Exhibits S-adenosyl-L-methionine-dependent methyltransferase activity. This is Putative S-adenosyl-L-methionine-dependent methyltransferase MAV_4444 from Mycobacterium avium (strain 104).